A 198-amino-acid chain; its full sequence is Regulation of enolase protein 1 (198 aa).

It is found in the cytoplasm. Functionally, functions in the galactose metabolic pathway via the GAL83 protein and that it may control the level of ENO1. The sequence is that of Regulation of enolase protein 1 (REE1) from Saccharomyces cerevisiae (strain ATCC 204508 / S288c) (Baker's yeast).